Consider the following 543-residue polypeptide: Proline--tRNA ligase, chloroplastic/mitochondrial (543 aa).

A disordered region spans residues 41 to 63 (ATAPSGTASPETKSSEVDRLRSD). The span at 53-63 (KSSEVDRLRSD) shows a compositional bias: basic and acidic residues.

The protein belongs to the class-II aminoacyl-tRNA synthetase family.

It is found in the plastid. It localises to the chloroplast. Its subcellular location is the mitochondrion. It carries out the reaction tRNA(Pro) + L-proline + ATP = L-prolyl-tRNA(Pro) + AMP + diphosphate. Its function is as follows. Catalyzes the attachment of proline to tRNA(Pro) in a two-step reaction: proline is first activated by ATP to form Pro-AMP and then transferred to the acceptor end of tRNA(Pro). This chain is Proline--tRNA ligase, chloroplastic/mitochondrial, found in Arabidopsis thaliana (Mouse-ear cress).